The sequence spans 320 residues: Ribosome biogenesis protein BRX1 homolog 2 (320 aa).

The disordered stretch occupies residues 1-40 (MGRKRKHSETEAPAPVKKSDEPAPDRPKRTLLGWKDKSEG). The span at 17 to 40 (KKSDEPAPDRPKRTLLGWKDKSEG) shows a compositional bias: basic and acidic residues. The Brix domain maps to 57–260 (EKVLVTCSRR…PIKIFAGSFG (204 aa)). Residues 297 to 320 (RKKMHELSNPLEPDEFADMWKDDE) are disordered. Acidic residues predominate over residues 308–320 (EPDEFADMWKDDE).

It belongs to the BRX1 family. In terms of tissue distribution, expressed in roots, rosette leaves, stems, flowers, siliques and seeds.

Its subcellular location is the nucleus. The protein resides in the nucleolus. In terms of biological role, involved in pre-rRNA processing and required for biogenesis of the large (60S) ribosomal subunit. Required for proper development. This is Ribosome biogenesis protein BRX1 homolog 2 from Arabidopsis thaliana (Mouse-ear cress).